We begin with the raw amino-acid sequence, 422 residues long: L-2-hydroxyglutarate dehydrogenase (422 aa).

Belongs to the L2HGDH family. Requires FAD as cofactor.

It is found in the cell inner membrane. The catalysed reaction is (S)-2-hydroxyglutarate + a quinone = a quinol + 2-oxoglutarate. It participates in amino-acid degradation. Its function is as follows. Catalyzes the dehydrogenation of L-2-hydroxyglutarate (L2HG) to alpha-ketoglutarate and couples to the respiratory chain by feeding electrons from the reaction into the membrane quinone pool. Functions in a L-lysine degradation pathway that proceeds via cadaverine, glutarate and L-2-hydroxyglutarate. Also displays some oxidase activity in vitro on L-2-hydroxyglutarate with O2 as the electron acceptor, but this activity is most likely not physiological. The protein is L-2-hydroxyglutarate dehydrogenase of Escherichia coli O17:K52:H18 (strain UMN026 / ExPEC).